The chain runs to 55 residues: Mitochondrial import receptor subunit TOM7 homolog (55 aa).

At 1 to 20 (MVKLSKEAKQRLQQLFKGGQ) the chain is on the cytoplasmic side. Residues 21–36 (FAIRWGFIPLVIYLGF) traverse the membrane as a helical segment. The Mitochondrial intermembrane portion of the chain corresponds to 37–55 (KRGADPGMPEPTVLSLLWG).

It belongs to the Tom7 family. As to quaternary structure, forms part of the preprotein translocase complex of the outer mitochondrial membrane (TOM complex) which consists of at least 7 different proteins (TOMM5, TOMM6, TOMM7, TOMM20, TOMM22, TOMM40 and TOMM70).

The protein localises to the mitochondrion outer membrane. Its function is as follows. Required for assembly and stability of the TOM complex. Positive regulator of PRKN translocation to damaged mitochondria. Acts probably by stabilizing PINK1 on the outer membrane of depolarized mitochondria. In Bos taurus (Bovine), this protein is Mitochondrial import receptor subunit TOM7 homolog (TOMM7).